The primary structure comprises 214 residues: MSDDDERGEEYLFKIVIIGDSAVGKSNLLTRYARNEFNPNSKATIGVEFQTQSMLIDGKEVKAQIWDTAGQERFRAVTSAYYRGAVGALVVYDITRSSTFENVGRWLDELNTHSDTTVAKMLIGNKCDLESIRAVSVEEGKSLAESEGLFFMETSALDSTNVKTAFEMVIREIYSNISRKQLNSDSYKEELTVNRVSLVKNENEGTKTFSCCSR.

Residue 19–26 (GDSAVGKS) participates in GTP binding. The Effector region signature appears at 41-49 (SKATIGVEF). GTP-binding positions include 67-71 (DTAGQ), 125-128 (NKCD), and 155-156 (SA). Residues Cys211 and Cys212 are each lipidated (S-geranylgeranyl cysteine).

The protein belongs to the small GTPase superfamily. Rab family. Interacts (via C-terminus) with GDI1. Interacts with PUX8/SAY1. As to expression, expressed in roots and actively dividing cells.

It localises to the golgi apparatus membrane. The protein localises to the golgi apparatus. The protein resides in the trans-Golgi network membrane. It is found in the cell membrane. In terms of biological role, intracellular vesicle trafficking and protein transport. Binds GTP and GDP and possesses intrinsic GTPase activity. In Arabidopsis thaliana (Mouse-ear cress), this protein is Ras-related protein RABA5c (RABA5C).